Reading from the N-terminus, the 338-residue chain is MGHTKRNKTGVLLMNLGTPDAPTTSAVRRYLAEFLSDPRVVEIPRLLWLLILHGIILRIRPAKSAALYKGIWTEAGSPLLAISERQQAKLQGYLDEQQLTDKNGQAVSVHLAMRYGSPSVQQTMLQMHQAGIDNLVVLPLYPQYAAPTTASAFDAIAKTLSQWRYLPSLHFIHTYHDNDDYISALFASIKADFDTNGMPERLLLSYHGMPERNLHLGDPYYCFCMKTTRLVIEKMQQQGLVFDSDFVVTSFQSRFGKAKWLQPYTDVTLEALASEGVRKIAVACPAFSADCLETLEEIEQENREVFIHAGGESFRYISALNDNDDHIVMMANLVKPYL.

2 residues coordinate Fe cation: H207 and E293.

Belongs to the ferrochelatase family.

Its subcellular location is the cytoplasm. It carries out the reaction heme b + 2 H(+) = protoporphyrin IX + Fe(2+). It functions in the pathway porphyrin-containing compound metabolism; protoheme biosynthesis; protoheme from protoporphyrin-IX: step 1/1. Catalyzes the ferrous insertion into protoporphyrin IX. The polypeptide is Ferrochelatase (Shewanella denitrificans (strain OS217 / ATCC BAA-1090 / DSM 15013)).